The sequence spans 166 residues: Phosphopantetheine adenylyltransferase (166 aa).

Substrate is bound at residue Ser11. Residues 11–12 (SF) and His19 contribute to the ATP site. Substrate-binding residues include Lys43, Val80, and Arg94. ATP is bound by residues 95–97 (GLR), Glu105, and 130–136 (VRTITAT).

It belongs to the bacterial CoaD family. As to quaternary structure, homohexamer. Mg(2+) serves as cofactor.

It localises to the cytoplasm. The enzyme catalyses (R)-4'-phosphopantetheine + ATP + H(+) = 3'-dephospho-CoA + diphosphate. The protein operates within cofactor biosynthesis; coenzyme A biosynthesis; CoA from (R)-pantothenate: step 4/5. Reversibly transfers an adenylyl group from ATP to 4'-phosphopantetheine, yielding dephospho-CoA (dPCoA) and pyrophosphate. The protein is Phosphopantetheine adenylyltransferase of Mesorhizobium japonicum (strain LMG 29417 / CECT 9101 / MAFF 303099) (Mesorhizobium loti (strain MAFF 303099)).